The chain runs to 440 residues: Ribulose bisphosphate carboxylase large chain (440 aa).

K4 bears the N6,N6,N6-trimethyllysine mark. Residues N113 and T163 each coordinate substrate. K165 functions as the Proton acceptor in the catalytic mechanism. K167 lines the substrate pocket. Residues K191, D193, and E194 each contribute to the Mg(2+) site. An N6-carboxylysine modification is found at K191. H284 serves as the catalytic Proton acceptor. The substrate site is built by R285, H317, and S369.

This sequence belongs to the RuBisCO large chain family. Type I subfamily. Heterohexadecamer of 8 large chains and 8 small chains; disulfide-linked. The disulfide link is formed within the large subunit homodimers. Mg(2+) serves as cofactor. The disulfide bond which can form in the large chain dimeric partners within the hexadecamer appears to be associated with oxidative stress and protein turnover.

It is found in the plastid. The protein resides in the chloroplast. The catalysed reaction is 2 (2R)-3-phosphoglycerate + 2 H(+) = D-ribulose 1,5-bisphosphate + CO2 + H2O. The enzyme catalyses D-ribulose 1,5-bisphosphate + O2 = 2-phosphoglycolate + (2R)-3-phosphoglycerate + 2 H(+). RuBisCO catalyzes two reactions: the carboxylation of D-ribulose 1,5-bisphosphate, the primary event in carbon dioxide fixation, as well as the oxidative fragmentation of the pentose substrate in the photorespiration process. Both reactions occur simultaneously and in competition at the same active site. The protein is Ribulose bisphosphate carboxylase large chain of Matteuccia struthiopteris (European ostrich fern).